Reading from the N-terminus, the 76-residue chain is ATP synthase subunit c (76 aa).

2 helical membrane passes run 12–32 (LGSI…GIIF) and 54–74 (ILGF…PFVY).

Belongs to the ATPase C chain family. In terms of assembly, F-type ATPases have 2 components, F(1) - the catalytic core - and F(0) - the membrane proton channel. F(1) has five subunits: alpha(3), beta(3), gamma(1), delta(1), epsilon(1). F(0) has three main subunits: a(1), b(2) and c(10-14). The alpha and beta chains form an alternating ring which encloses part of the gamma chain. F(1) is attached to F(0) by a central stalk formed by the gamma and epsilon chains, while a peripheral stalk is formed by the delta and b chains.

The protein localises to the cell membrane. In terms of biological role, f(1)F(0) ATP synthase produces ATP from ADP in the presence of a proton or sodium gradient. F-type ATPases consist of two structural domains, F(1) containing the extramembraneous catalytic core and F(0) containing the membrane proton channel, linked together by a central stalk and a peripheral stalk. During catalysis, ATP synthesis in the catalytic domain of F(1) is coupled via a rotary mechanism of the central stalk subunits to proton translocation. Its function is as follows. Key component of the F(0) channel; it plays a direct role in translocation across the membrane. A homomeric c-ring of between 10-14 subunits forms the central stalk rotor element with the F(1) delta and epsilon subunits. The chain is ATP synthase subunit c from Streptomyces coelicolor (strain ATCC BAA-471 / A3(2) / M145).